Here is a 178-residue protein sequence, read N- to C-terminus: dCTP deaminase, dUMP-forming (178 aa).

DCTP is bound by residues 96-101 (RSSLGR), D113, 121-123 (TLE), Q142, Y156, and Q163. E123 functions as the Proton donor/acceptor in the catalytic mechanism.

This sequence belongs to the dCTP deaminase family. As to quaternary structure, homotrimer.

It carries out the reaction dCTP + 2 H2O = dUMP + NH4(+) + diphosphate. Its pathway is pyrimidine metabolism; dUMP biosynthesis; dUMP from dCTP: step 1/1. Its function is as follows. Bifunctional enzyme that catalyzes both the deamination of dCTP to dUTP and the hydrolysis of dUTP to dUMP without releasing the toxic dUTP intermediate. The polypeptide is dCTP deaminase, dUMP-forming (Acetivibrio thermocellus (strain ATCC 27405 / DSM 1237 / JCM 9322 / NBRC 103400 / NCIMB 10682 / NRRL B-4536 / VPI 7372) (Clostridium thermocellum)).